We begin with the raw amino-acid sequence, 814 residues long: Transcription activator of gluconeogenesis PADG_03802 (814 aa).

Residues 1–90 (MTSSARNGSP…SAKDPLRPRR (90 aa)) are disordered. A compositionally biased stretch (low complexity) spans 69-83 (STSSTAASANNASAK). A DNA-binding region (zn(2)-C6 fungal-type) is located at residues 97–125 (CFACQRAHLTCGDERPCQRCIKRGLQDTC). 6 disordered regions span residues 164 to 208 (NTNS…TNNY), 236 to 287 (SAFQ…PTFF), 323 to 384 (AGDT…SRNI), 442 to 461 (PPTN…STPS), 598 to 617 (TGGS…YNSR), and 695 to 739 (SAAG…ATNV). Over residues 171 to 188 (NGTNSNSDNNSTNTNSNN) the composition is skewed to low complexity. Polar residues-rich tracts occupy residues 189–208 (KPSH…TNNY), 248–279 (FDLS…SQNP), 339–359 (GRSS…NQSP), and 375–384 (GQGQTNSRNI). Residues 442–451 (PPTNTQHQQQ) are compositionally biased toward low complexity. A compositionally biased stretch (low complexity) spans 720–739 (GTTSAVNGVSNGSGNNATNV).

It belongs to the ERT1/acuK family.

The protein localises to the nucleus. In terms of biological role, transcription factor which regulates nonfermentable carbon utilization. Activator of gluconeogenetic genes. The protein is Transcription activator of gluconeogenesis PADG_03802 of Paracoccidioides brasiliensis (strain Pb18).